The primary structure comprises 360 residues: MKKYLALALIAPLLVSCSSSNKKGTEYNEAWVKDTNGFDILMGQFAHNIENIWGYNEVLLAGPKDYVKYTDQYQTRSHINFDAGTITVETIAGTDPRGRLRQAIIKTLLMGDDPNSIDLYSDVDDIQISKEPFLYGQVVDNTGASIRWEWRAARYADYLLQTRLKSRNNGLRVIYSITINLVPNHLDKRAHKYLGMVRQASRKYGVDESLILAIMQTESSFNPYAVSHADAMGLMQVVQHSAGKDVFRSQGKSGLPSRSYLFDPANNIDTGTAYLAMLNNVYLAGIDNPTSRRYAVITAYNGGAGSVLRVFSSDKVQAANIINSMAPGDVYQTLTTRHPSAESRRYLYKVNTAQKSYRRK.

The signal sequence occupies residues 1–16 (MKKYLALALIAPLLVS). A lipid anchor (N-palmitoyl cysteine) is attached at cysteine 17. A lipid anchor (S-diacylglycerol cysteine) is attached at cysteine 17.

This sequence belongs to the transglycosylase Slt family.

It localises to the cell outer membrane. It catalyses the reaction Exolytic cleavage of the (1-&gt;4)-beta-glycosidic linkage between N-acetylmuramic acid (MurNAc) and N-acetylglucosamine (GlcNAc) residues in peptidoglycan, from either the reducing or the non-reducing ends of the peptidoglycan chains, with concomitant formation of a 1,6-anhydrobond in the MurNAc residue.. Murein-degrading enzyme. May play a role in recycling of muropeptides during cell elongation and/or cell division. This Klebsiella pneumoniae (strain 342) protein is Membrane-bound lytic murein transglycosylase C.